A 721-amino-acid chain; its full sequence is Dipeptidyl-peptidase 5 (721 aa).

The N-terminal stretch at 1–18 (MGAFRWLSIAAAASTALA) is a signal peptide. Asparagine 75, asparagine 94, asparagine 151, and asparagine 254 each carry an N-linked (GlcNAc...) asparagine glycan. The tract at residues 271–297 (ARPINGPDSPGTPKGIKGDSSSPVFSP) is disordered. N-linked (GlcNAc...) asparagine glycans are attached at residues asparagine 380 and asparagine 450. Serine 560 functions as the Charge relay system in the catalytic mechanism. An N-linked (GlcNAc...) asparagine glycan is attached at asparagine 607. Catalysis depends on charge relay system residues aspartate 643 and histidine 675.

Belongs to the peptidase S9C family. N-glycosylated. In terms of tissue distribution, expressed in mycelia and conidia.

It is found in the secreted. Functionally, may be involved in metabolism of dipeptides or may affect host defense mechanisms. Has a substrate specificity limited to the hydrolysis of X-Ala, His-Ser, and Ser-Tyr dipeptides at a neutral pH optimum. The chain is Dipeptidyl-peptidase 5 from Aspergillus fumigatus (strain CBS 144.89 / FGSC A1163 / CEA10) (Neosartorya fumigata).